The chain runs to 147 residues: uncharacterized protein (147 aa).

It to B.subtilis XkdM.

This is an uncharacterized protein from Bacillus subtilis (strain 168).